The chain runs to 31 residues: Jingzhaotoxin F7-15.33 (31 aa).

3 disulfides stabilise this stretch: Cys-2–Cys-16, Cys-9–Cys-21, and Cys-15–Cys-28.

This sequence belongs to the neurotoxin 10 (Hwtx-1) family. Expressed by the venom gland.

It is found in the secreted. Probable ion channel inhibitor. The chain is Jingzhaotoxin F7-15.33 from Chilobrachys guangxiensis (Chinese earth tiger tarantula).